The following is a 102-amino-acid chain: 10 kDa heat shock protein, mitochondrial (102 aa).

Residue A2 is modified to N-acetylalanine. At K8 the chain carries N6-acetyllysine. The residue at position 28 (K28) is an N6-succinyllysine. N6-acetyllysine; alternate is present on K40. N6-malonyllysine; alternate is present on residues K40, K54, and K56. Residues K40, K54, K56, K66, and K70 each carry the N6-succinyllysine; alternate modification. 3 positions are modified to N6-acetyllysine; alternate: K56, K66, and K70. The residue at position 79 (T79) is a Phosphothreonine. N6-acetyllysine; alternate occurs at positions 80 and 86. An N6-succinyllysine; alternate mark is found at K80 and K86. The residue at position 99 (K99) is an N6-acetyllysine.

Belongs to the GroES chaperonin family. As to quaternary structure, homoheptamer arranged in a ring structure. 2 heptameric Hsp10 rings interact with a Hsp60 tetradecamer in the structure of a back-to-back double heptameric ring to form the symmetrical football complex.

It localises to the mitochondrion matrix. Functionally, co-chaperonin implicated in mitochondrial protein import and macromolecular assembly. Together with Hsp60, facilitates the correct folding of imported proteins. May also prevent misfolding and promote the refolding and proper assembly of unfolded polypeptides generated under stress conditions in the mitochondrial matrix. The functional units of these chaperonins consist of heptameric rings of the large subunit Hsp60, which function as a back-to-back double ring. In a cyclic reaction, Hsp60 ring complexes bind one unfolded substrate protein per ring, followed by the binding of ATP and association with 2 heptameric rings of the co-chaperonin Hsp10. This leads to sequestration of the substrate protein in the inner cavity of Hsp60 where, for a certain period of time, it can fold undisturbed by other cell components. Synchronous hydrolysis of ATP in all Hsp60 subunits results in the dissociation of the chaperonin rings and the release of ADP and the folded substrate protein. The polypeptide is 10 kDa heat shock protein, mitochondrial (Hspe1) (Rattus norvegicus (Rat)).